The following is a 161-amino-acid chain: Cyclic pyranopterin monophosphate synthase (161 aa).

Residues 76-78 (MCH) and 114-115 (ME) contribute to the substrate site. D129 is an active-site residue.

It belongs to the MoaC family. In terms of assembly, homohexamer; trimer of dimers.

The catalysed reaction is (8S)-3',8-cyclo-7,8-dihydroguanosine 5'-triphosphate = cyclic pyranopterin phosphate + diphosphate. The protein operates within cofactor biosynthesis; molybdopterin biosynthesis. Catalyzes the conversion of (8S)-3',8-cyclo-7,8-dihydroguanosine 5'-triphosphate to cyclic pyranopterin monophosphate (cPMP). This Clostridium acetobutylicum (strain ATCC 824 / DSM 792 / JCM 1419 / IAM 19013 / LMG 5710 / NBRC 13948 / NRRL B-527 / VKM B-1787 / 2291 / W) protein is Cyclic pyranopterin monophosphate synthase.